The sequence spans 111 residues: MAMPNLGDMMKQIQQAGEKMQDVQKQLEKIVAHGEAGGGMVKVSVSGKQKLLSLTIDPDIMDDAEMVQDLVLAAVNNALDESARLAQEEISKVTGGMMNPADILKNLNLGQ.

This sequence belongs to the YbaB/EbfC family. In terms of assembly, homodimer.

It localises to the cytoplasm. The protein resides in the nucleoid. Its function is as follows. Binds to DNA and alters its conformation. May be involved in regulation of gene expression, nucleoid organization and DNA protection. This Pelodictyon phaeoclathratiforme (strain DSM 5477 / BU-1) protein is Nucleoid-associated protein Ppha_1174.